The sequence spans 345 residues: Nuclear distribution protein nudE-like 1 (345 aa).

Residues 28 to 190 are a coiled coil; the sequence is QSFQEARDEL…LAVRERQQEV (163 aa). The self-association stretch occupies residues 56 to 166; the sequence is VQAEQRNRDL…LDEKESLLVS (111 aa). An interaction with KATNB1 region spans residues 64 to 189; sequence DLQADNQRLK…ELAVRERQQE (126 aa). Positions 114–133 are required for interaction with PAFAH1B1; sequence YVRELEQANDDLERAKRATI. Positions 175–345 are interaction with CENPF; the sequence is RDLRQELAVR…SAPGMLPLSV (171 aa). The tract at residues 189–256 is interaction with YWHAE; it reads EVTRKSAPSS…SARISALNIV (68 aa). The interval 191–345 is interaction with NEFL; that stretch reads TRKSAPSSPT…SAPGMLPLSV (155 aa). An interaction with KATNA1 region spans residues 195-256; it reads APSSPTLDCE…SARISALNIV (62 aa). Serine 215 carries the phosphoserine modification. Positions 217–240 are disordered; that stretch reads PATPVGKGTENSFPSPKAIPNGFG. At threonine 219 the chain carries Phosphothreonine. Serine 231 bears the Phosphoserine mark. Residues 241–280 are interaction with DISC1; the sequence is TSPLTPSARISALNIVGDLLRKVGALESKLAACRNFAKDQ. The residue at position 242 (serine 242) is a Phosphoserine; by CDK1. At threonine 245 the chain carries Phosphothreonine; by CDK1 and MAPK1. The tract at residues 256 to 291 is required for localization to the centrosome and interaction with dynein, dynactin, tubulin gamma, PCM1 and PCNT; sequence VGDLLRKVGALESKLAACRNFAKDQASRKSYVPGSV. Cysteine 273 carries the S-palmitoyl cysteine; by ZDHHC2, ZDHHC3 and ZDHHC7 lipid modification. The interval 314 to 345 is disordered; that stretch reads KGAVNGFDPAPPPPGLGSSRPSSAPGMLPLSV. A compositionally biased stretch (low complexity) spans 329–339; it reads LGSSRPSSAPG. Position 344 is a phosphoserine (serine 344).

The protein belongs to the nudE family. As to quaternary structure, interacts with PLEKHM1 (via N- and C-terminus). Interacts with dynactin, PCM1 and PCNT. Interacts (via C-terminus) with CENPF. Self-associates. Interacts with DISC1, dynein, tubulin gamma, KATNA1, KATNB1, microtubules, PAFAHB1 and YWHAE. Interacts directly with NEFL and indirectly with NEFH. Interacts with ZNF365. Interacts with GTP-bound RAB9A; the interaction may lead to RAB9A-dynein motor tethering. Phosphorylated by CDK1 and MAPK1. Phosphorylated in mitosis. Phosphorylated by CDK5. Phosphorylation by CDK5 promotes interaction with KATNA1 and YWHAE. Post-translationally, palmitoylation at Cys-273 reduces affinity for dynein. As to expression, expressed in brain, liver, lung and testis (at protein level). Expressed in brain, epididymis, eye, heart, kidney, large intestine, liver, ovary, pancreas, prostate, skeletal muscle, smooth muscle, spleen, submaxillary gland, testis, thymus and thyroid. Within the brain expression is pronounced in the cortex, hippocampus, olfactory bulb, striatum, thalamic and hypothalamic structures and in the molecular layer of the cerebellum. Largely excluded from cortical progenitor cells which express NDE1.

The protein localises to the cytoplasm. The protein resides in the cytoskeleton. It localises to the microtubule organizing center. Its subcellular location is the centrosome. It is found in the chromosome. The protein localises to the centromere. The protein resides in the kinetochore. It localises to the spindle. In terms of biological role, required for organization of the cellular microtubule array and microtubule anchoring at the centrosome. May regulate microtubule organization at least in part by targeting the microtubule severing protein KATNA1 to the centrosome. Also positively regulates the activity of the minus-end directed microtubule motor protein dynein. May enhance dynein-mediated microtubule sliding by targeting dynein to the microtubule plus ends. Required for several dynein- and microtubule-dependent processes such as the maintenance of Golgi integrity, the centripetal motion of secretory vesicles and the coupling of the nucleus and centrosome. Also required during brain development for the migration of newly formed neurons from the ventricular/subventricular zone toward the cortical plate. Plays a role, together with DISC1, in the regulation of neurite outgrowth. Required for mitosis in some cell types but appears to be dispensible for mitosis in cortical neuronal progenitors, which instead requires NDE1. Facilitates the polymerization of neurofilaments from the individual subunits NEFH and NEFL. Positively regulates lysosome peripheral distribution and ruffled border formation in osteoclasts. Plays a role, together with DISC1, in the regulation of neurite outgrowth. May act as a RAB9A/B effector that tethers RAB9-associated late endosomes to the dynein motor for their retrograde transport to the trans-Golgi network. The polypeptide is Nuclear distribution protein nudE-like 1 (Mus musculus (Mouse)).